The sequence spans 208 residues: 3-isopropylmalate dehydratase small subunit 2 (208 aa).

The tract at residues 163–208 (EGERLDNASTSAGHGHAGTPLGDDPAKEDGPRPEQASGHQKEEHHA) is disordered.

This sequence belongs to the LeuD family. LeuD type 2 subfamily. As to quaternary structure, heterodimer of LeuC and LeuD.

The catalysed reaction is (2R,3S)-3-isopropylmalate = (2S)-2-isopropylmalate. It functions in the pathway amino-acid biosynthesis; L-leucine biosynthesis; L-leucine from 3-methyl-2-oxobutanoate: step 2/4. Its function is as follows. Catalyzes the isomerization between 2-isopropylmalate and 3-isopropylmalate, via the formation of 2-isopropylmaleate. This chain is 3-isopropylmalate dehydratase small subunit 2 (leuD2), found in Deinococcus radiodurans (strain ATCC 13939 / DSM 20539 / JCM 16871 / CCUG 27074 / LMG 4051 / NBRC 15346 / NCIMB 9279 / VKM B-1422 / R1).